We begin with the raw amino-acid sequence, 260 residues long: Purine nucleoside phosphorylase PD_1754 (260 aa).

Histidine 79, cysteine 120, and histidine 137 together coordinate Zn(2+).

The protein belongs to the purine nucleoside phosphorylase YfiH/LACC1 family. In terms of assembly, homodimer. Cu(2+) serves as cofactor. The cofactor is Zn(2+).

The catalysed reaction is adenosine + phosphate = alpha-D-ribose 1-phosphate + adenine. It catalyses the reaction S-methyl-5'-thioadenosine + phosphate = 5-(methylsulfanyl)-alpha-D-ribose 1-phosphate + adenine. It carries out the reaction inosine + phosphate = alpha-D-ribose 1-phosphate + hypoxanthine. The enzyme catalyses adenosine + H2O + H(+) = inosine + NH4(+). Its function is as follows. Purine nucleoside enzyme that catalyzes the phosphorolysis of adenosine and inosine nucleosides, yielding D-ribose 1-phosphate and the respective free bases, adenine and hypoxanthine. Also catalyzes the phosphorolysis of S-methyl-5'-thioadenosine into adenine and S-methyl-5-thio-alpha-D-ribose 1-phosphate. Also has adenosine deaminase activity. In Xylella fastidiosa (strain Temecula1 / ATCC 700964), this protein is Purine nucleoside phosphorylase PD_1754.